A 502-amino-acid polypeptide reads, in one-letter code: Cytochrome P450 3A5 (502 aa).

A heme-binding site is contributed by Cys441.

The protein belongs to the cytochrome P450 family. Requires heme as cofactor.

It localises to the endoplasmic reticulum membrane. The protein resides in the microsome membrane. The enzyme catalyses an organic molecule + reduced [NADPH--hemoprotein reductase] + O2 = an alcohol + oxidized [NADPH--hemoprotein reductase] + H2O + H(+). It catalyses the reaction 17beta-estradiol + reduced [NADPH--hemoprotein reductase] + O2 = 2-hydroxy-17beta-estradiol + oxidized [NADPH--hemoprotein reductase] + H2O + H(+). The catalysed reaction is 17beta-estradiol + reduced [NADPH--hemoprotein reductase] + O2 = 4-hydroxy-17beta-estradiol + oxidized [NADPH--hemoprotein reductase] + H2O + H(+). It carries out the reaction estrone + reduced [NADPH--hemoprotein reductase] + O2 = 2-hydroxyestrone + oxidized [NADPH--hemoprotein reductase] + H2O + H(+). The enzyme catalyses estrone + reduced [NADPH--hemoprotein reductase] + O2 = 4-hydroxyestrone + oxidized [NADPH--hemoprotein reductase] + H2O + H(+). It catalyses the reaction testosterone + reduced [NADPH--hemoprotein reductase] + O2 = 6beta,17beta-dihydroxyandrost-4-en-3-one + oxidized [NADPH--hemoprotein reductase] + H2O + H(+). The catalysed reaction is androst-4-ene-3,17-dione + reduced [NADPH--hemoprotein reductase] + O2 = 6beta-hydroxyandrost-4-ene-3,17-dione + oxidized [NADPH--hemoprotein reductase] + H2O + H(+). It carries out the reaction progesterone + reduced [NADPH--hemoprotein reductase] + O2 = 6beta-hydroxyprogesterone + oxidized [NADPH--hemoprotein reductase] + H2O + H(+). The enzyme catalyses all-trans-retinol + reduced [NADPH--hemoprotein reductase] + O2 = all-trans-retinal + oxidized [NADPH--hemoprotein reductase] + 2 H2O + H(+). It catalyses the reaction all-trans-retinoate + reduced [NADPH--hemoprotein reductase] + O2 = all-trans-4-hydroxyretinoate + oxidized [NADPH--hemoprotein reductase] + H2O + H(+). It participates in steroid hormone biosynthesis. The protein operates within cofactor metabolism; retinol metabolism. Functionally, a cytochrome P450 monooxygenase involved in the metabolism of steroid hormones and vitamins. Mechanistically, uses molecular oxygen inserting one oxygen atom into a substrate, and reducing the second into a water molecule, with two electrons provided by NADPH via cytochrome P450 reductase (NADPH--hemoprotein reductase). Catalyzes the hydroxylation of carbon-hydrogen bonds. Exhibits high catalytic activity for the formation of catechol estrogens from 17beta-estradiol (E2) and estrone (E1), namely 2-hydroxy E1 and E2. Catalyzes 6beta-hydroxylation of the steroid hormones testosterone, progesterone, and androstenedione. Catalyzes the oxidative conversion of all-trans-retinol to all-trans-retinal, a rate-limiting step for the biosynthesis of all-trans-retinoic acid (atRA). Further metabolizes all trans-retinoic acid (atRA) to 4-hydroxyretinoate and may play a role in hepatic atRA clearance. Also involved in the oxidative metabolism of xenobiotics, including calcium channel blocking drug nifedipine and immunosuppressive drug cyclosporine. This Homo sapiens (Human) protein is Cytochrome P450 3A5.